We begin with the raw amino-acid sequence, 613 residues long: MLVFKSTMECSISSTIHVLGSCKTSDDVNQIHGRLIKTGIIKNSNLTTRIVLAFASSRRPYLADFARCVFHEYHVCSFSFGEVEDPFLWNAVIKSHSHGKDPRQALLLLCLMLENGVSVDKFSLSLVLKACSRLGFVKGGMQIHGFLKKTGLWSDLFLQNCLIGLYLKCGCLGLSRQMFDRMPKRDSVSYNSMIDGYVKCGLIVSARELFDLMPMEMKNLISWNSMISGYAQTSDGVDIASKLFADMPEKDLISWNSMIDGYVKHGRIEDAKGLFDVMPRRDVVTWATMIDGYAKLGFVHHAKTLFDQMPHRDVVAYNSMMAGYVQNKYHMEALEIFSDMEKESHLLPDDTTLVIVLPAIAQLGRLSKAIDMHLYIVEKQFYLGGKLGVALIDMYSKCGSIQHAMLVFEGIENKSIDHWNAMIGGLAIHGLGESAFDMLLQIERLSLKPDDITFVGVLNACSHSGLVKEGLLCFELMRRKHKIEPRLQHYGCMVDILSRSGSIELAKNLIEEMPVEPNDVIWRTFLTACSHHKEFETGELVAKHLILQAGYNPSSYVLLSNMYASFGMWKDVRRVRTMMKERKIEKIPGCSWIELDGRVHEFFVDSIEVSSTL.

PPR repeat units follow at residues 85-119, 120-154, 155-185, 186-216, 219-250, 251-285, 286-312, 313-347, 349-383, 384-414, 415-449, 450-480, and 486-516; these read DPFL…GVSV, DKFS…GLWS, DLFL…MPKR, DSVS…MPME, NLIS…MPEK, DLIS…DVVT, WATM…MPHR, DVVA…SHLL, DDTT…QFYL, GGKL…IENK, SIDH…SLKP, DDIT…MRRK, and RLQH…MPVE. A type E motif region spans residues 521-596; sequence IWRTFLTACS…IPGCSWIELD (76 aa).

Belongs to the PPR family. PCMP-E subfamily. In terms of assembly, interacts with DYW1.

The protein resides in the plastid. Its subcellular location is the chloroplast. Functionally, plays a major role in chloroplast RNA editing. Acts as a site-recognition transacting factor to recruit C-deaminase. Involved in single RNA editing events. Required for the edition of the site 1 of ndhD (ndhD-1 site corresponding to cytidine-2), which is a plastid-encoded subunit of the NADH-plastoquinone oxidoreductase. The interaction with DYW1 is required for its function in editing the ndhD-1 site. The protein is Pentatricopeptide repeat-containing protein At2g45350, chloroplastic (CRR4) of Arabidopsis thaliana (Mouse-ear cress).